We begin with the raw amino-acid sequence, 250 residues long: Probable chemoreceptor glutamine deamidase CheD (250 aa).

Belongs to the CheD family.

The catalysed reaction is L-glutaminyl-[protein] + H2O = L-glutamyl-[protein] + NH4(+). Probably deamidates glutamine residues to glutamate on methyl-accepting chemotaxis receptors (MCPs), playing an important role in chemotaxis. The chain is Probable chemoreceptor glutamine deamidase CheD from Paraburkholderia xenovorans (strain LB400).